A 316-amino-acid polypeptide reads, in one-letter code: L-lactate dehydrogenase (316 aa).

Residues V15, D37, K42, Y68, and 82-83 (GL) each bind NAD(+). Substrate is bound by residues Q85, R91, and 123 to 126 (NPVD). NAD(+)-binding positions include 121–123 (ASN) and T146. Substrate is bound at residue 151-154 (DTSR). The beta-D-fructose 1,6-bisphosphate site is built by R156 and H171. H178 serves as the catalytic Proton acceptor. A Phosphotyrosine modification is found at Y222. Substrate is bound at residue T231.

This sequence belongs to the LDH/MDH superfamily. LDH family. As to quaternary structure, homotetramer.

It localises to the cytoplasm. The enzyme catalyses (S)-lactate + NAD(+) = pyruvate + NADH + H(+). The protein operates within fermentation; pyruvate fermentation to lactate; (S)-lactate from pyruvate: step 1/1. With respect to regulation, allosterically activated by fructose 1,6-bisphosphate (FBP). Functionally, catalyzes the conversion of lactate to pyruvate. This chain is L-lactate dehydrogenase, found in Borrelia hermsii (strain HS1 / DAH).